The primary structure comprises 375 residues: MTPIVFIDRDGTLIEEPPDFQIDAYEKLRLVNGVIPALLKLRDAGYHFVIVTNQDGLGSPAYPQASFDGPNALMLQIFSSQGIVFRDVLIDRSWPTDNAPTRKPGIGLMVAYLQDRDIDWARSAMVGDRPTDLQFAENLNIRGFQLRTPQFGGDWDWDGIAHTLADAPRRAVVQRHTKETTIRVEIDLDGAPQARITTGLPFFDHMLEQIAKHAGISLQISAVGDLHIDEHHTIEDTGLALGQAVRQALGDKRGIGRYGFDPPQLPWQVSGAAAHGGFTLPMDETQASAVLDFSGRPYCVFEGTFVRERVGDMPTELVPHFFRSLCDASGMNLHLSVHGDNDHHKVEACFKALARALRQALQRHGHVLPSTKGAL.

The tract at residues 1-168 (MTPIVFIDRD…GIAHTLADAP (168 aa)) is histidinol-phosphatase. Asp8 functions as the Nucleophile in the catalytic mechanism. Mg(2+) is bound by residues Asp8, Asp10, and Asp128. The Proton donor role is filled by Asp10. The imidazoleglycerol-phosphate dehydratase stretch occupies residues 169-375 (RRAVVQRHTK…HVLPSTKGAL (207 aa)).

It in the N-terminal section; belongs to the histidinol-phosphatase family. In the C-terminal section; belongs to the imidazoleglycerol-phosphate dehydratase family. Requires Mg(2+) as cofactor.

Its subcellular location is the cytoplasm. The enzyme catalyses D-erythro-1-(imidazol-4-yl)glycerol 3-phosphate = 3-(imidazol-4-yl)-2-oxopropyl phosphate + H2O. It catalyses the reaction L-histidinol phosphate + H2O = L-histidinol + phosphate. It functions in the pathway amino-acid biosynthesis; L-histidine biosynthesis; L-histidine from 5-phospho-alpha-D-ribose 1-diphosphate: step 6/9. It participates in amino-acid biosynthesis; L-histidine biosynthesis; L-histidine from 5-phospho-alpha-D-ribose 1-diphosphate: step 8/9. This Xylella fastidiosa (strain 9a5c) protein is Histidine biosynthesis bifunctional protein HisB.